The primary structure comprises 91 residues: M-myrmeciitoxin-Mb3a (91 aa).

An N-terminal signal peptide occupies residues 1–21 (MKLSCLSLALAIILILAIVHS). A propeptide spanning residues 22 to 54 (PNMEVKALADPEADAFGEANAFGEADAFAEANA) is cleaved from the precursor.

In terms of assembly, homodimer; disulfide-linked. As to expression, expressed by the venom gland and reservoir.

Its subcellular location is the secreted. Its function is as follows. Causes a significant and dose-dependent histamine release, probably by influencing the signal transduction of mast cells through a non-IgE-mediated pathway. This peptide does not have cytotoxic activities. This Myrmecia banksi (Jack jumper ant) protein is M-myrmeciitoxin-Mb3a.